The primary structure comprises 493 residues: Dipeptide permease D (493 aa).

A run of 13 helical transmembrane segments spans residues 14–34 (VVAL…LLIL), 49–69 (ELFS…GYLA), 91–111 (LVLG…AIIV), 138–158 (GGFS…PIAC), 167–187 (WAMG…IFLC), 212–232 (NWGW…VLFW), 235–255 (WSVY…AKIY), 267–287 (LGLI…AQQG), 312–332 (MFQS…AWLV), 344–364 (IWGK…ILTL), 379–399 (LMVL…PVAM), 413–433 (VLTG…AGVI), and 458–478 (VFEQ…LIWL).

Belongs to the major facilitator superfamily. Proton-dependent oligopeptide transporter (POT/PTR) (TC 2.A.17) family. DtpD subfamily.

The protein resides in the cell inner membrane. Its function is as follows. Probable proton-dependent permease that transports dipeptides. This chain is Dipeptide permease D, found in Salmonella typhimurium (strain 14028s / SGSC 2262).